We begin with the raw amino-acid sequence, 184 residues long: ATP synthase subunit b, chloroplastic (184 aa).

Residues 27-49 form a helical membrane-spanning segment; the sequence is LATNLINLSVVLGVLIFFGKGVL.

Belongs to the ATPase B chain family. As to quaternary structure, F-type ATPases have 2 components, F(1) - the catalytic core - and F(0) - the membrane proton channel. F(1) has five subunits: alpha(3), beta(3), gamma(1), delta(1), epsilon(1). F(0) has four main subunits: a(1), b(1), b'(1) and c(10-14). The alpha and beta chains form an alternating ring which encloses part of the gamma chain. F(1) is attached to F(0) by a central stalk formed by the gamma and epsilon chains, while a peripheral stalk is formed by the delta, b and b' chains.

The protein localises to the plastid. Its subcellular location is the chloroplast thylakoid membrane. In terms of biological role, f(1)F(0) ATP synthase produces ATP from ADP in the presence of a proton or sodium gradient. F-type ATPases consist of two structural domains, F(1) containing the extramembraneous catalytic core and F(0) containing the membrane proton channel, linked together by a central stalk and a peripheral stalk. During catalysis, ATP synthesis in the catalytic domain of F(1) is coupled via a rotary mechanism of the central stalk subunits to proton translocation. Component of the F(0) channel, it forms part of the peripheral stalk, linking F(1) to F(0). The sequence is that of ATP synthase subunit b, chloroplastic from Helianthus annuus (Common sunflower).